The following is a 163-amino-acid chain: Methyl-CpG-binding domain-containing protein 3 (163 aa).

The segment at 6–56 (TTLIDSYAAQCWKCLKVRSIESQEDYEEIRSKTLEKFFECKRCEEPGDMVM) adopts a CW-type zinc-finger fold. The 73-residue stretch at 65-137 (WFQDEHSIPK…EEVSFAAPKR (73 aa)) folds into the MBD domain. Residues 140–163 (LKKKPVDSHSSSRNTEEDGVSRDA) are disordered. Residues 153-163 (NTEEDGVSRDA) show a composition bias toward basic and acidic residues.

It localises to the nucleus. Its function is as follows. Probable transcriptional regulator. The chain is Methyl-CpG-binding domain-containing protein 3 (MBD3) from Arabidopsis thaliana (Mouse-ear cress).